The chain runs to 397 residues: Ubiquitin-like modifier-activating enzyme 5 (397 aa).

G76, D97, K120, N143, and N177 together coordinate ATP. Residues C219 and C222 each contribute to the Zn(2+) site. The Glycyl thioester intermediate role is filled by C243. Residues C296 and C301 each coordinate Zn(2+). The interval 362-384 is disordered; sequence LAYEPPASTKHSETTSTTAVSDD. The segment covering 375–384 has biased composition (low complexity); sequence TTSTTAVSDD.

It belongs to the ubiquitin-activating E1 family. UBA5 subfamily.

In terms of biological role, E1-like enzyme which activates UFM1. The sequence is that of Ubiquitin-like modifier-activating enzyme 5 from Aedes aegypti (Yellowfever mosquito).